Consider the following 306-residue polypeptide: Ribonuclease Z (306 aa).

Residues His-63, His-65, Asp-67, His-68, His-140, Asp-211, and His-269 each coordinate Zn(2+). Residue Asp-67 is the Proton acceptor of the active site.

It belongs to the RNase Z family. Homodimer. Zn(2+) is required as a cofactor.

The catalysed reaction is Endonucleolytic cleavage of RNA, removing extra 3' nucleotides from tRNA precursor, generating 3' termini of tRNAs. A 3'-hydroxy group is left at the tRNA terminus and a 5'-phosphoryl group is left at the trailer molecule.. Zinc phosphodiesterase, which displays some tRNA 3'-processing endonuclease activity. Probably involved in tRNA maturation, by removing a 3'-trailer from precursor tRNA. In Listeria monocytogenes serotype 4a (strain HCC23), this protein is Ribonuclease Z.